A 305-amino-acid polypeptide reads, in one-letter code: tRNA dimethylallyltransferase (305 aa).

13–20 (GPTSSGKT) lines the ATP pocket. Residue 15–20 (TSSGKT) participates in substrate binding. The tract at residues 39-42 (DSKQ) is interaction with substrate tRNA.

This sequence belongs to the IPP transferase family. Monomer. The cofactor is Mg(2+).

It carries out the reaction adenosine(37) in tRNA + dimethylallyl diphosphate = N(6)-dimethylallyladenosine(37) in tRNA + diphosphate. Functionally, catalyzes the transfer of a dimethylallyl group onto the adenine at position 37 in tRNAs that read codons beginning with uridine, leading to the formation of N6-(dimethylallyl)adenosine (i(6)A). This is tRNA dimethylallyltransferase from Neorickettsia sennetsu (strain ATCC VR-367 / Miyayama) (Ehrlichia sennetsu).